A 286-amino-acid polypeptide reads, in one-letter code: CBY1-interacting BAR domain-containing protein 1 (286 aa).

Residues 1–47 (MLRRNLDERDAQTKQLQDAVTNVEKHFGELCQIFAAYVRKTARLRDK) constitute a mitochondrion transit peptide. Residues 10–220 (DAQTKQLQDA…NIDEDEDLEV (211 aa)) form a BAR-like region. Positions 107–178 (KMKRDDLKAT…IDNFEKQKIK (72 aa)) form a coiled coil. The segment at 258 to 286 (GQISTCRTRKDQQVEDEDDEELDVTEDEN) is disordered. The segment covering 271–286 (VEDEDDEELDVTEDEN) has biased composition (acidic residues).

The protein belongs to the CIBAR family. Homodimer (via BAR-like domain). Heterodimer with FAM92B (via BAR-like domains). Interacts (via BAR-like domain) with CBY1; this interaction is required for targeting FAM92A to centriole and cilium basal body. Interacts (via BAR-like domain) with CBY3; both proteins form a ninefold symmetric structure at the flagellar base; are recruited to the annulus in a mutually dependent manner and regulate annulus positionning. In terms of tissue distribution, expressed in the heart, liver, spleen, lung, kidney, brain and muscle (at protein level). Strongly expressed throughout the developing limb bud, including the progress zone and the apical ectodermal ridge.

The protein resides in the cytoplasm. It is found in the cytoskeleton. Its subcellular location is the microtubule organizing center. It localises to the centrosome. The protein localises to the centriole. The protein resides in the cilium basal body. It is found in the cell projection. Its subcellular location is the cilium. It localises to the nucleus. The protein localises to the mitochondrion inner membrane. The protein resides in the flagellum. Functionally, plays a critical role in regulating mitochondrial ultrastructure and function by maintaining the integrity of mitochondrial morphology, particularly the organization of cristae. Preferentially binds to negatively charged phospholipids like cardiolipin and phosphatidylinositol 4,5-bisphosphate enhancing its interaction with mitochondrial membranes. Induces membrane curvature and tubulation, which are critical for maintaining mitochondrial ultrastructure and the organization of cristae. Plays a crucial role in ciliogenesis. May play a role in limb development through its role in ciliogenesis. Plays a key role in the correct positioning of the annulus, a septin-based ring structure in the sperm flagellum, serving both as a physical barrier and a membrane diffusion barrier that separates the midpiece (MP) from the principal piece (PP). This positioning is essential for proper sperm motility and function. Interacts with CBY3 to form a complex which localizes to the curved membrane region of the flagellar pocket. By doing so, may provide stability and rigidity to the periannular membrane to prevent membrane deformation. This function is crucial for halting annulus migration at the proximal end of the fibrous sheath-containing PP. This Mus musculus (Mouse) protein is CBY1-interacting BAR domain-containing protein 1.